A 199-amino-acid chain; its full sequence is Nicotinamide riboside kinase 1 (199 aa).

Position 10 to 18 (10 to 18) interacts with ATP; that stretch reads GVTNSGKTT. Mg(2+) is bound by residues T17 and D36. The active-site Proton acceptor is the D36. Substrate-binding positions include 36–39 and 55–56; these read DDFF and YD. R128 serves as a coordination point for ATP. Residues R129 and 134–135 contribute to the substrate site; that span reads YQ. ATP-binding positions include 132-134 and 172-174; these read RVY and KSE.

It belongs to the uridine kinase family. NRK subfamily. Monomer.

The enzyme catalyses beta-nicotinamide D-riboside + ATP = beta-nicotinamide D-ribonucleotide + ADP + H(+). The catalysed reaction is beta-D-ribosylnicotinate + ATP = nicotinate beta-D-ribonucleotide + ADP + H(+). Its pathway is cofactor biosynthesis; NAD(+) biosynthesis. Catalyzes the phosphorylation of nicotinamide riboside (NR) and nicotinic acid riboside (NaR) to form nicotinamide mononucleotide (NMN) and nicotinic acid mononucleotide (NaMN). The enzyme also phosphorylates the antitumor drugs tiazofurin and 3-deazaguanosine. This chain is Nicotinamide riboside kinase 1 (NMRK1), found in Homo sapiens (Human).